Here is a 451-residue protein sequence, read N- to C-terminus: MLNVTDLRGHTPSKSDIRRALPRGGTDVVSVLPIVEPVVDDVQNRGAEAALDYGEKFDHIRPASVRVPAEVLKAAEDTLDPRVREAIEESIRRVRKVHADQKPREHTTELAPGGTVTERFLPIDRVGLYVPGGNAVYPSSVIMNAVPAQEAGVGTLVVASPPQADHGGWPHPTILAACSILGVDEVWAVGGAQAVALLAFGDDSADLEPVDIITGPGNIFVTAAKRLVRGVVGTDSEAGPTEIAILADDTANPVNVAYDLISQAEHDVMAASVLITDSEQLARDVNREIEARYAITRNADRVAEALRGKQSGIVLVDDIEVGIAVADQYAAEHLEVHTANAREVSERISNAGAIFVGDFSPVPLGDYSAGSNHVLPTSGTARFSAGLSTHTFLRPVNLIEYDEAALKDISEVVINFADAEDLPAHGEAIRARFETLPTTTADTTDTPDATA.

Residues 1–20 (MLNVTDLRGHTPSKSDIRRA) form a disordered region. The segment covering 7-19 (LRGHTPSKSDIRR) has biased composition (basic and acidic residues). Tyrosine 129, glutamine 193, and asparagine 218 together coordinate NAD(+). 3 residues coordinate substrate: threonine 241, glutamine 263, and histidine 266. Residues glutamine 263 and histidine 266 each coordinate Zn(2+). Residues glutamate 332 and histidine 333 each act as proton acceptor in the active site. Histidine 333, aspartate 366, glutamate 420, and histidine 425 together coordinate substrate. Residue aspartate 366 coordinates Zn(2+). Histidine 425 serves as a coordination point for Zn(2+).

Belongs to the histidinol dehydrogenase family. Zn(2+) is required as a cofactor.

The catalysed reaction is L-histidinol + 2 NAD(+) + H2O = L-histidine + 2 NADH + 3 H(+). It participates in amino-acid biosynthesis; L-histidine biosynthesis; L-histidine from 5-phospho-alpha-D-ribose 1-diphosphate: step 9/9. Functionally, catalyzes the sequential NAD-dependent oxidations of L-histidinol to L-histidinaldehyde and then to L-histidine. This Corynebacterium efficiens (strain DSM 44549 / YS-314 / AJ 12310 / JCM 11189 / NBRC 100395) protein is Histidinol dehydrogenase.